The primary structure comprises 113 residues: Large ribosomal subunit protein uL22 (113 aa).

This sequence belongs to the universal ribosomal protein uL22 family. Part of the 50S ribosomal subunit.

This protein binds specifically to 23S rRNA; its binding is stimulated by other ribosomal proteins, e.g. L4, L17, and L20. It is important during the early stages of 50S assembly. It makes multiple contacts with different domains of the 23S rRNA in the assembled 50S subunit and ribosome. Its function is as follows. The globular domain of the protein is located near the polypeptide exit tunnel on the outside of the subunit, while an extended beta-hairpin is found that lines the wall of the exit tunnel in the center of the 70S ribosome. This chain is Large ribosomal subunit protein uL22, found in Geobacillus kaustophilus (strain HTA426).